The primary structure comprises 371 residues: Cytoplasmic tRNA 2-thiolation protein 1 (371 aa).

Belongs to the TtcA family. CTU1/NCS6/ATPBD3 subfamily.

Its subcellular location is the cytoplasm. Its pathway is tRNA modification; 5-methoxycarbonylmethyl-2-thiouridine-tRNA biosynthesis. Its function is as follows. Plays a central role in 2-thiolation of mcm(5)S(2)U at tRNA wobble positions of tRNA(Lys), tRNA(Glu) and tRNA(Gln). Directly binds tRNAs and probably acts by catalyzing adenylation of tRNAs, an intermediate required for 2-thiolation. It is unclear whether it acts as a sulfurtransferase that transfers sulfur from thiocarboxylated URM1 onto the uridine of tRNAs at wobble position. Prior mcm(5) tRNA modification by the elongator complex is required for 2-thiolation. May also be involved in protein urmylation. This Kluyveromyces lactis (strain ATCC 8585 / CBS 2359 / DSM 70799 / NBRC 1267 / NRRL Y-1140 / WM37) (Yeast) protein is Cytoplasmic tRNA 2-thiolation protein 1.